The sequence spans 189 residues: Elongation factor P (189 aa).

An N6-(3,6-diaminohexanoyl)-5-hydroxylysine modification is found at lysine 34.

The protein belongs to the elongation factor P family. May be beta-lysylated on the epsilon-amino group of Lys-34 by the combined action of EpmA and EpmB, and then hydroxylated on the C5 position of the same residue by EpmC (if this protein is present). Lysylation is critical for the stimulatory effect of EF-P on peptide-bond formation. The lysylation moiety may extend toward the peptidyltransferase center and stabilize the terminal 3-CCA end of the tRNA. Hydroxylation of the C5 position on Lys-34 may allow additional potential stabilizing hydrogen-bond interactions with the P-tRNA.

It localises to the cytoplasm. It participates in protein biosynthesis; polypeptide chain elongation. Involved in peptide bond synthesis. Alleviates ribosome stalling that occurs when 3 or more consecutive Pro residues or the sequence PPG is present in a protein, possibly by augmenting the peptidyl transferase activity of the ribosome. Modification of Lys-34 is required for alleviation. The polypeptide is Elongation factor P (Francisella tularensis subsp. tularensis (strain FSC 198)).